A 595-amino-acid chain; its full sequence is Thiol:disulfide interchange protein DsbD (595 aa).

Residues 1–24 form the signal peptide; sequence MAQRFITLILLLCSVLLAPHSAQS. Cysteines 134 and 140 form a disulfide. Residues 166-186 are disordered; it reads NSSATVNPPATTQPEGDATPV. 9 helical membrane passes run 197–217, 233–253, 270–290, 311–331, 332–352, 353–373, 384–404, 411–431, and 435–455; these read ALLIGIGIAFTPCVLPMYPLI, ILILAVVYVQGMALTYTLLGL, YVLIGLSVLFVLLALSMFGLY, GGSLAGVFAMGALAGLICSPC, TTAPLSAILLYIAQSGNMLAG, GGTLYLYALGMGIPLVVVTLF, WMQYVKEAFGFVILALPVFLL, VWGLRLWSLLAVAFFGWAFVL, and AHAGWVRVCQLLLLAALLIVA. Cys-209 and Cys-331 form a disulfide bridge. The region spanning 452–592 is the Thioredoxin domain; sequence LIVARPLQDW…FLQHLQNTPA (141 aa). Cys-507 and Cys-510 form a disulfide bridge.

This sequence belongs to the thioredoxin family. DsbD subfamily.

The protein localises to the cell inner membrane. It catalyses the reaction [protein]-dithiol + NAD(+) = [protein]-disulfide + NADH + H(+). The enzyme catalyses [protein]-dithiol + NADP(+) = [protein]-disulfide + NADPH + H(+). Its function is as follows. Required to facilitate the formation of correct disulfide bonds in some periplasmic proteins and for the assembly of the periplasmic c-type cytochromes. Acts by transferring electrons from cytoplasmic thioredoxin to the periplasm. This transfer involves a cascade of disulfide bond formation and reduction steps. In Yersinia pestis bv. Antiqua (strain Nepal516), this protein is Thiol:disulfide interchange protein DsbD.